Reading from the N-terminus, the 265-residue chain is MSDILNTILARKADEVAERSARVPLAELIARSADLPLTRGFAAAMQASIAAGDPAVIAEVKKASPSKGVIRPDFHPADIAVSYEFGGATCLSVLTDVDFFQGSDAYLRQARDACTLPVLRKDFTVDPYQVYEARVLGADCILLIVSALEDAQLADLSGLAMQLGLDVLVEVHDVDELERAVQVPVPLIGINNRNLRTFEVTLQTTLDMRAAVPRDRVLVTESGIVTQADVQLMRSNDVNAFLVGETFMRAAEPGESLRQLFFAHD.

This sequence belongs to the TrpC family.

The catalysed reaction is 1-(2-carboxyphenylamino)-1-deoxy-D-ribulose 5-phosphate + H(+) = (1S,2R)-1-C-(indol-3-yl)glycerol 3-phosphate + CO2 + H2O. The protein operates within amino-acid biosynthesis; L-tryptophan biosynthesis; L-tryptophan from chorismate: step 4/5. The sequence is that of Indole-3-glycerol phosphate synthase from Xanthomonas oryzae pv. oryzae (strain PXO99A).